A 237-amino-acid polypeptide reads, in one-letter code: Purine nucleoside phosphorylase DeoD-type (237 aa).

H4 provides a ligand contact to a purine D-ribonucleoside. Phosphate-binding positions include G20, R24, R43, and 87-90 (RVGT). Residues 179 to 181 (EME) and 203 to 204 (SD) each bind a purine D-ribonucleoside. The Proton donor role is filled by D204.

Belongs to the PNP/UDP phosphorylase family. As to quaternary structure, homohexamer; trimer of homodimers.

It catalyses the reaction a purine D-ribonucleoside + phosphate = a purine nucleobase + alpha-D-ribose 1-phosphate. It carries out the reaction a purine 2'-deoxy-D-ribonucleoside + phosphate = a purine nucleobase + 2-deoxy-alpha-D-ribose 1-phosphate. In terms of biological role, catalyzes the reversible phosphorolytic breakdown of the N-glycosidic bond in the beta-(deoxy)ribonucleoside molecules, with the formation of the corresponding free purine bases and pentose-1-phosphate. This is Purine nucleoside phosphorylase DeoD-type from Streptococcus pyogenes serotype M12 (strain MGAS2096).